The following is a 359-amino-acid chain: Peptide chain release factor 1 (359 aa).

Residue Gln235 is modified to N5-methylglutamine. Residues Gln283–Arg305 form a disordered region.

The protein belongs to the prokaryotic/mitochondrial release factor family. In terms of processing, methylated by PrmC. Methylation increases the termination efficiency of RF1.

It is found in the cytoplasm. Functionally, peptide chain release factor 1 directs the termination of translation in response to the peptide chain termination codons UAG and UAA. This chain is Peptide chain release factor 1, found in Bartonella bacilliformis (strain ATCC 35685 / KC583 / Herrer 020/F12,63).